Reading from the N-terminus, the 242-residue chain is 1-(5-phosphoribosyl)-5-[(5-phosphoribosylamino)methylideneamino] imidazole-4-carboxamide isomerase (242 aa).

D8 acts as the Proton acceptor in catalysis. The active-site Proton donor is D129.

The protein belongs to the HisA/HisF family.

The protein localises to the cytoplasm. The enzyme catalyses 1-(5-phospho-beta-D-ribosyl)-5-[(5-phospho-beta-D-ribosylamino)methylideneamino]imidazole-4-carboxamide = 5-[(5-phospho-1-deoxy-D-ribulos-1-ylimino)methylamino]-1-(5-phospho-beta-D-ribosyl)imidazole-4-carboxamide. The protein operates within amino-acid biosynthesis; L-histidine biosynthesis; L-histidine from 5-phospho-alpha-D-ribose 1-diphosphate: step 4/9. This is 1-(5-phosphoribosyl)-5-[(5-phosphoribosylamino)methylideneamino] imidazole-4-carboxamide isomerase from Syntrophus aciditrophicus (strain SB).